We begin with the raw amino-acid sequence, 243 residues long: MIILDINQNYKYFMFNKVCLKFKIKNFNILVIYLYDIKEKNIYKTIKNKIKNFSYFFKKMPCIINIKYLSEEDQYFWKYFHKKLSNLGLCIIGVSGCNNKIWEKIITRNGLLIFKEQINKKIFYEKKNKITKINNNYIIDKPIRSGQTIYAKKKNLIIMNTVNSGAEVIADGDIHIYGIMRGRASAGASKDTKSQIFCTKLYAEFISIAGKNWINENVLNSYLGKPVRFYIKNDILTIQKFSL.

The protein belongs to the MinC family. Interacts with MinD and FtsZ.

Cell division inhibitor that blocks the formation of polar Z ring septums. Rapidly oscillates between the poles of the cell to destabilize FtsZ filaments that have formed before they mature into polar Z rings. Prevents FtsZ polymerization. This chain is Probable septum site-determining protein MinC, found in Wigglesworthia glossinidia brevipalpis.